Reading from the N-terminus, the 254-residue chain is uncharacterized protein (254 aa).

In terms of domain architecture, ABC transporter spans 6–239; sequence LSVDGVEFAY…NIKAVYGVDA (234 aa). 38–45 contacts ATP; it reads GVNGAGKS.

Belongs to the ABC transporter superfamily.

This is an uncharacterized protein from Methanocaldococcus jannaschii (strain ATCC 43067 / DSM 2661 / JAL-1 / JCM 10045 / NBRC 100440) (Methanococcus jannaschii).